The sequence spans 498 residues: Archaemetzincin-1 (498 aa).

H261 provides a ligand contact to Zn(2+). Residue E262 is the Proton acceptor of the active site. 5 residues coordinate Zn(2+): H265, C272, C277, C296, and C299. Positions 332–381 (QEAGEPSVWEDTPPASADSGMCCESDSEPGTSVSEPLTPDAGSHTFASGP) are disordered.

This sequence belongs to the peptidase M54 family. Zn(2+) is required as a cofactor.

Probable zinc metalloprotease. The chain is Archaemetzincin-1 (AMZ1) from Homo sapiens (Human).